Reading from the N-terminus, the 206-residue chain is Small ribosomal subunit protein uS7 (206 aa).

Residues 1–19 (MSAEDTPEADADAAEESEP) show a composition bias toward acidic residues. The interval 1–25 (MSAEDTPEADADAAEESEPETARAK) is disordered. Ser2 bears the N-acetylserine mark.

The protein belongs to the universal ribosomal protein uS7 family. As to quaternary structure, part of the 30S ribosomal subunit.

Functionally, one of the primary rRNA binding proteins, it binds directly to 16S rRNA where it nucleates assembly of the head domain of the 30S subunit. Is located at the subunit interface close to the decoding center. In Haloarcula marismortui (strain ATCC 43049 / DSM 3752 / JCM 8966 / VKM B-1809) (Halobacterium marismortui), this protein is Small ribosomal subunit protein uS7.